A 368-amino-acid chain; its full sequence is tRNA 2-selenouridine synthase (368 aa).

One can recognise a Rhodanese domain in the interval 15-138; sequence FLNQHPIMDV…LRQYLIGVIE (124 aa). The active-site S-selanylcysteine intermediate is Cys-98.

The protein belongs to the SelU family. As to quaternary structure, monomer.

The catalysed reaction is 5-methylaminomethyl-2-thiouridine(34) in tRNA + selenophosphate + (2E)-geranyl diphosphate + H2O + H(+) = 5-methylaminomethyl-2-selenouridine(34) in tRNA + (2E)-thiogeraniol + phosphate + diphosphate. The enzyme catalyses 5-methylaminomethyl-2-thiouridine(34) in tRNA + (2E)-geranyl diphosphate = 5-methylaminomethyl-S-(2E)-geranyl-thiouridine(34) in tRNA + diphosphate. It carries out the reaction 5-methylaminomethyl-S-(2E)-geranyl-thiouridine(34) in tRNA + selenophosphate + H(+) = 5-methylaminomethyl-2-(Se-phospho)selenouridine(34) in tRNA + (2E)-thiogeraniol. It catalyses the reaction 5-methylaminomethyl-2-(Se-phospho)selenouridine(34) in tRNA + H2O = 5-methylaminomethyl-2-selenouridine(34) in tRNA + phosphate. Functionally, involved in the post-transcriptional modification of the uridine at the wobble position (U34) of tRNA(Lys), tRNA(Glu) and tRNA(Gln). Catalyzes the conversion of 2-thiouridine (S2U-RNA) to 2-selenouridine (Se2U-RNA). Acts in a two-step process involving geranylation of 2-thiouridine (S2U) to S-geranyl-2-thiouridine (geS2U) and subsequent selenation of the latter derivative to 2-selenouridine (Se2U) in the tRNA chain. This is tRNA 2-selenouridine synthase from Shewanella baltica (strain OS223).